A 221-amino-acid polypeptide reads, in one-letter code: FMN-dependent NADH:quinone oxidoreductase 1 (221 aa).

FMN contacts are provided by residues 17–19 (SAS) and 148–151 (SSGG).

It belongs to the azoreductase type 1 family. As to quaternary structure, homodimer. The cofactor is FMN.

The catalysed reaction is 2 a quinone + NADH + H(+) = 2 a 1,4-benzosemiquinone + NAD(+). The enzyme catalyses N,N-dimethyl-1,4-phenylenediamine + anthranilate + 2 NAD(+) = 2-(4-dimethylaminophenyl)diazenylbenzoate + 2 NADH + 2 H(+). Its function is as follows. Quinone reductase that provides resistance to thiol-specific stress caused by electrophilic quinones. Functionally, also exhibits azoreductase activity. Catalyzes the reductive cleavage of the azo bond in aromatic azo compounds to the corresponding amines. The protein is FMN-dependent NADH:quinone oxidoreductase 1 of Clostridium acetobutylicum (strain ATCC 824 / DSM 792 / JCM 1419 / IAM 19013 / LMG 5710 / NBRC 13948 / NRRL B-527 / VKM B-1787 / 2291 / W).